A 681-amino-acid polypeptide reads, in one-letter code: Elongation factor G (681 aa).

Positions 5–279 (KNIRNIGIIA…SIVNFLPSPI (275 aa)) constitute a tr-type G domain. GTP-binding positions include 14-21 (AHVDAGKT), 82-86 (DTPGH), and 136-139 (NKLD).

Belongs to the TRAFAC class translation factor GTPase superfamily. Classic translation factor GTPase family. EF-G/EF-2 subfamily.

Its subcellular location is the cytoplasm. Catalyzes the GTP-dependent ribosomal translocation step during translation elongation. During this step, the ribosome changes from the pre-translocational (PRE) to the post-translocational (POST) state as the newly formed A-site-bound peptidyl-tRNA and P-site-bound deacylated tRNA move to the P and E sites, respectively. Catalyzes the coordinated movement of the two tRNA molecules, the mRNA and conformational changes in the ribosome. The chain is Elongation factor G from Carsonella ruddii (strain PV).